The following is a 94-amino-acid chain: Pyrimidine/purine nucleoside phosphorylase (94 aa).

The protein belongs to the nucleoside phosphorylase PpnP family.

It catalyses the reaction a purine D-ribonucleoside + phosphate = a purine nucleobase + alpha-D-ribose 1-phosphate. The enzyme catalyses adenosine + phosphate = alpha-D-ribose 1-phosphate + adenine. It carries out the reaction cytidine + phosphate = cytosine + alpha-D-ribose 1-phosphate. The catalysed reaction is guanosine + phosphate = alpha-D-ribose 1-phosphate + guanine. It catalyses the reaction inosine + phosphate = alpha-D-ribose 1-phosphate + hypoxanthine. The enzyme catalyses thymidine + phosphate = 2-deoxy-alpha-D-ribose 1-phosphate + thymine. It carries out the reaction uridine + phosphate = alpha-D-ribose 1-phosphate + uracil. The catalysed reaction is xanthosine + phosphate = alpha-D-ribose 1-phosphate + xanthine. Catalyzes the phosphorolysis of diverse nucleosides, yielding D-ribose 1-phosphate and the respective free bases. Can use uridine, adenosine, guanosine, cytidine, thymidine, inosine and xanthosine as substrates. Also catalyzes the reverse reactions. The chain is Pyrimidine/purine nucleoside phosphorylase from Shigella dysenteriae serotype 1 (strain Sd197).